The primary structure comprises 371 residues: Pyruvate dehydrogenase E1 component subunit alpha (371 aa).

As to quaternary structure, heterodimer of an alpha and a beta chain. The cofactor is thiamine diphosphate.

It carries out the reaction N(6)-[(R)-lipoyl]-L-lysyl-[protein] + pyruvate + H(+) = N(6)-[(R)-S(8)-acetyldihydrolipoyl]-L-lysyl-[protein] + CO2. Activity of the E1 module is inhibited by the pyruvate dehydrogenase inhibitor PdhI. Functionally, the pyruvate dehydrogenase complex catalyzes the overall conversion of pyruvate to acetyl-CoA and CO(2). It contains multiple copies of three enzymatic components: pyruvate dehydrogenase (E1), dihydrolipoamide acetyltransferase (E2) and lipoamide dehydrogenase (E3). The B.subtilis PDH complex also possesses branched-chain 2-oxoacid dehydrogenase (BCDH) activity. The sequence is that of Pyruvate dehydrogenase E1 component subunit alpha from Bacillus subtilis (strain 168).